Here is a 283-residue protein sequence, read N- to C-terminus: Ribosomal RNA small subunit methyltransferase A (283 aa).

Asn-22, Leu-24, Gly-49, Glu-70, and Asn-113 together coordinate S-adenosyl-L-methionine.

The protein belongs to the class I-like SAM-binding methyltransferase superfamily. rRNA adenine N(6)-methyltransferase family. RsmA subfamily.

It is found in the cytoplasm. The catalysed reaction is adenosine(1518)/adenosine(1519) in 16S rRNA + 4 S-adenosyl-L-methionine = N(6)-dimethyladenosine(1518)/N(6)-dimethyladenosine(1519) in 16S rRNA + 4 S-adenosyl-L-homocysteine + 4 H(+). Specifically dimethylates two adjacent adenosines (A1518 and A1519) in the loop of a conserved hairpin near the 3'-end of 16S rRNA in the 30S particle. May play a critical role in biogenesis of 30S subunits. The polypeptide is Ribosomal RNA small subunit methyltransferase A (Myxococcus xanthus (strain DK1622)).